A 436-amino-acid polypeptide reads, in one-letter code: 3-ketoacyl-CoA thiolase (436 aa).

Residue C99 is the Acyl-thioester intermediate of the active site. Residues H392 and C422 each act as proton acceptor in the active site.

Belongs to the thiolase-like superfamily. Thiolase family. In terms of assembly, heterotetramer of two alpha chains (FadJ) and two beta chains (FadI).

It localises to the cytoplasm. It catalyses the reaction an acyl-CoA + acetyl-CoA = a 3-oxoacyl-CoA + CoA. The protein operates within lipid metabolism; fatty acid beta-oxidation. Catalyzes the final step of fatty acid oxidation in which acetyl-CoA is released and the CoA ester of a fatty acid two carbons shorter is formed. The chain is 3-ketoacyl-CoA thiolase from Shewanella denitrificans (strain OS217 / ATCC BAA-1090 / DSM 15013).